The following is a 122-amino-acid chain: UPF0231 protein VF_2154 (122 aa).

It belongs to the UPF0231 family.

This is UPF0231 protein VF_2154 from Aliivibrio fischeri (strain ATCC 700601 / ES114) (Vibrio fischeri).